We begin with the raw amino-acid sequence, 313 residues long: Methionyl-tRNA formyltransferase (313 aa).

A (6S)-5,6,7,8-tetrahydrofolate-binding site is contributed by 112 to 115 (SLLP).

Belongs to the Fmt family.

It carries out the reaction L-methionyl-tRNA(fMet) + (6R)-10-formyltetrahydrofolate = N-formyl-L-methionyl-tRNA(fMet) + (6S)-5,6,7,8-tetrahydrofolate + H(+). Its function is as follows. Attaches a formyl group to the free amino group of methionyl-tRNA(fMet). The formyl group appears to play a dual role in the initiator identity of N-formylmethionyl-tRNA by promoting its recognition by IF2 and preventing the misappropriation of this tRNA by the elongation apparatus. The polypeptide is Methionyl-tRNA formyltransferase (Geotalea uraniireducens (strain Rf4) (Geobacter uraniireducens)).